The sequence spans 343 residues: Follistatin (343 aa).

Residues 1 to 28 (MLNQRIHPGMLVLLMFLYHFMEDHTAQA) form the signal peptide. One can recognise a TB domain in the interval 29–102 (GNCWLRQARN…TCENVDCGPG (74 aa)). Intrachain disulfides connect C31–C54, C41–C87, C55–C90, C94–C105, C99–C115, C117–C149, C121–C142, and C131–C163. Residues 93-116 (TCENVDCGPGKKCKMNKKNKPRCV) form the Follistatin-like 1 domain. 3 Kazal-like domains span residues 99-165 (CGPG…KCKK), 185-240 (NAYC…KCIK), and 263-317 (RGRC…SCNS). The N-linked (GlcNAc...) asparagine glycan is linked to N123. The Follistatin-like 2 domain occupies 166–189 (TCRDVLCPGSSTCVVDQTNNAYCV). Intrachain disulfides connect C191-C224, C195-C217, and C206-C238. The Follistatin-like 3 domain maps to 243–267 (SCEDIQCSAGKKCLWDFKVGRGRCA). Intrachain disulfides connect C269/C301, C273/C294, and C283/C315. N-linked (GlcNAc...) asparagine glycosylation occurs at N287. The segment at 315–343 (CNSINEDPEEEEEDEDQDYSFPISSILEW) is disordered. A compositionally biased stretch (acidic residues) spans 320–332 (EDPEEEEEDEDQD).

In terms of assembly, monomer. In terms of tissue distribution, ciliary ganglion neurons. Levels are higher in the iris than the choroid.

Its subcellular location is the secreted. Binds directly to activin and functions as an activin antagonist. Inhibits activin A signaling in the iris and regulates somatostatin phenotype in ciliary ganglion neurons. Specific inhibitor of the biosynthesis and secretion of pituitary follicle stimulating hormone (FSH). The protein is Follistatin (FST) of Gallus gallus (Chicken).